Consider the following 45-residue polypeptide: Ribosome-inactivating protein TAP-29 (45 aa).

The protein belongs to the ribosome-inactivating protein family. Type 1 RIP subfamily.

It carries out the reaction Endohydrolysis of the N-glycosidic bond at one specific adenosine on the 28S rRNA.. Capable of inhibiting HIV-1 infection and replication. It inactivates eukaryotic 60S ribosomal subunits. This chain is Ribosome-inactivating protein TAP-29, found in Trichosanthes kirilowii (Chinese snake gourd).